A 122-amino-acid chain; its full sequence is Large ribosomal subunit protein uL14 (122 aa).

Belongs to the universal ribosomal protein uL14 family. As to quaternary structure, part of the 50S ribosomal subunit. Forms a cluster with proteins L3 and L19. In the 70S ribosome, L14 and L19 interact and together make contacts with the 16S rRNA in bridges B5 and B8.

Binds to 23S rRNA. Forms part of two intersubunit bridges in the 70S ribosome. This is Large ribosomal subunit protein uL14 from Afipia carboxidovorans (strain ATCC 49405 / DSM 1227 / KCTC 32145 / OM5) (Oligotropha carboxidovorans).